The sequence spans 110 residues: Ig lambda-1 chain V region S178 (110 aa).

Residues 1-106 (QAVVTQESAL…RWVFGGGTKL (106 aa)) form the Ig-like domain.

This chain is Ig lambda-1 chain V region S178, found in Mus musculus (Mouse).